The sequence spans 127 residues: Ribonuclease P protein component 1 (127 aa).

This sequence belongs to the eukaryotic/archaeal RNase P protein component 1 family. In terms of assembly, consists of a catalytic RNA component and at least 4 protein subunits. Forms a subcomplex with Rnp4 which stimulates the catalytic RNA.

The protein localises to the cytoplasm. It carries out the reaction Endonucleolytic cleavage of RNA, removing 5'-extranucleotides from tRNA precursor.. Part of ribonuclease P, a protein complex that generates mature tRNA molecules by cleaving their 5'-ends. The RNA is catalytic, but its KM for pre-tRNA is 170-fold decreased in the presence of the 4 known protein subunits (Rnp1-4). The protein subunits also decrease the amount of Mg(2+) needed for activity. This Pyrococcus furiosus (strain ATCC 43587 / DSM 3638 / JCM 8422 / Vc1) protein is Ribonuclease P protein component 1.